A 397-amino-acid chain; its full sequence is Lipoyl synthase 2, chloroplastic (397 aa).

The N-terminal 35 residues, 1 to 35 (MIEQSLSKPSFSLSIPIPKAPKSKSSFFCSYSKIR), are a transit peptide targeting the chloroplast. Residues 49-85 (AKHPQNSTTINNGSSSSASVDLKNNEKGPYPYPGGGK) are disordered. Residues 54 to 67 (NSTTINNGSSSSAS) are compositionally biased toward low complexity. Cys128, Cys133, Cys139, Cys159, Cys163, Cys166, and Ser374 together coordinate [4Fe-4S] cluster. The 222-residue stretch at 142 to 363 (GGGDGIATAT…KEYGESIGFR (222 aa)) folds into the Radical SAM core domain.

The protein belongs to the radical SAM superfamily. Lipoyl synthase family. [4Fe-4S] cluster is required as a cofactor.

It is found in the plastid. The protein resides in the chloroplast. It carries out the reaction [[Fe-S] cluster scaffold protein carrying a second [4Fe-4S](2+) cluster] + N(6)-octanoyl-L-lysyl-[protein] + 2 oxidized [2Fe-2S]-[ferredoxin] + 2 S-adenosyl-L-methionine + 4 H(+) = [[Fe-S] cluster scaffold protein] + N(6)-[(R)-dihydrolipoyl]-L-lysyl-[protein] + 4 Fe(3+) + 2 hydrogen sulfide + 2 5'-deoxyadenosine + 2 L-methionine + 2 reduced [2Fe-2S]-[ferredoxin]. The protein operates within protein modification; protein lipoylation via endogenous pathway; protein N(6)-(lipoyl)lysine from octanoyl-[acyl-carrier-protein]: step 2/2. Its function is as follows. Catalyzes the radical-mediated insertion of two sulfur atoms into the C-6 and C-8 positions of the octanoyl moiety bound to the lipoyl domains of lipoate-dependent enzymes, thereby converting the octanoylated domains into lipoylated derivatives. This chain is Lipoyl synthase 2, chloroplastic, found in Populus trichocarpa (Western balsam poplar).